The chain runs to 89 residues: Small ribosomal subunit protein uS14 (89 aa).

This sequence belongs to the universal ribosomal protein uS14 family. In terms of assembly, part of the 30S ribosomal subunit. Contacts proteins S3 and S10.

Its function is as follows. Binds 16S rRNA, required for the assembly of 30S particles and may also be responsible for determining the conformation of the 16S rRNA at the A site. This Flavobacterium psychrophilum (strain ATCC 49511 / DSM 21280 / CIP 103535 / JIP02/86) protein is Small ribosomal subunit protein uS14.